Reading from the N-terminus, the 130-residue chain is Small ribosomal subunit protein uS9 (130 aa).

It belongs to the universal ribosomal protein uS9 family.

The chain is Small ribosomal subunit protein uS9 from Stutzerimonas stutzeri (strain A1501) (Pseudomonas stutzeri).